The primary structure comprises 31 residues: Cliotide T17 (31 aa).

The segment at residues 1-31 (GTVPCGESCVFIPCITGIAGCSCKNKVCYLN) is a cross-link (cyclopeptide (Gly-Asn)). Cystine bridges form between C5-C21, C9-C23, and C14-C28.

Contains 3 disulfide bonds. In terms of processing, this is a cyclic peptide. Expressed in root nodules but not in seed.

In terms of biological role, probably participates in a plant defense mechanism. The protein is Cliotide T17 of Clitoria ternatea (Butterfly pea).